The following is a 154-amino-acid chain: Transcriptional repressor NrdR (154 aa).

A zinc finger lies at 3-34; that stretch reads CPFCGANDTKVIDSRLVAEGEQVRRRRECVAC. The 91-residue stretch at 49-139 folds into the ATP-cone domain; it reads PRLIKQDGTR…VYRRFQDLDE (91 aa).

The protein belongs to the NrdR family. The cofactor is Zn(2+).

Its function is as follows. Negatively regulates transcription of bacterial ribonucleotide reductase nrd genes and operons by binding to NrdR-boxes. In Pseudomonas putida (strain ATCC 700007 / DSM 6899 / JCM 31910 / BCRC 17059 / LMG 24140 / F1), this protein is Transcriptional repressor NrdR.